A 150-amino-acid polypeptide reads, in one-letter code: Cell division protein SepF (150 aa).

It belongs to the SepF family. Homodimer. Interacts with FtsZ.

The protein localises to the cytoplasm. Its function is as follows. Cell division protein that is part of the divisome complex and is recruited early to the Z-ring. Probably stimulates Z-ring formation, perhaps through the cross-linking of FtsZ protofilaments. Its function overlaps with FtsA. The chain is Cell division protein SepF from Clostridium kluyveri (strain NBRC 12016).